A 273-amino-acid polypeptide reads, in one-letter code: Phosphonates import ATP-binding protein PhnC (273 aa).

Positions 2–245 (LRIDKLTKRF…VAREIYGADA (244 aa)) constitute an ABC transporter domain. 34 to 41 (GRSGAGKS) contributes to the ATP binding site.

The protein belongs to the ABC transporter superfamily. Phosphonates importer (TC 3.A.1.9.1) family. As to quaternary structure, the complex is composed of two ATP-binding proteins (PhnC), two transmembrane proteins (PhnE) and a solute-binding protein (PhnD).

The protein resides in the cell inner membrane. The enzyme catalyses phosphonate(out) + ATP + H2O = phosphonate(in) + ADP + phosphate + H(+). Its function is as follows. Part of the ABC transporter complex PhnCDE involved in phosphonates import. Responsible for energy coupling to the transport system. The polypeptide is Phosphonates import ATP-binding protein PhnC (Ruegeria pomeroyi (strain ATCC 700808 / DSM 15171 / DSS-3) (Silicibacter pomeroyi)).